The sequence spans 418 residues: Dihydrofolate synthase/folylpolyglutamate synthase (418 aa).

Residue glycine 53–threonine 56 participates in ATP binding. Serine 77 serves as a coordination point for Mg(2+). Threonine 116–glutamate 119 contributes to the 7,8-dihydropteroate binding site. Glutamate 140 contacts Mg(2+). Leucine 147–alanine 149 contacts 7,8-dihydropteroate. Histidine 167 contributes to the Mg(2+) binding site. ATP contacts are provided by asparagine 252, arginine 284, and aspartate 297.

This sequence belongs to the folylpolyglutamate synthase family. Monomer. Mg(2+) serves as cofactor.

The enzyme catalyses 7,8-dihydropteroate + L-glutamate + ATP = 7,8-dihydrofolate + ADP + phosphate + H(+). It carries out the reaction (6S)-5,6,7,8-tetrahydrofolyl-(gamma-L-Glu)(n) + L-glutamate + ATP = (6S)-5,6,7,8-tetrahydrofolyl-(gamma-L-Glu)(n+1) + ADP + phosphate + H(+). The catalysed reaction is 10-formyltetrahydrofolyl-(gamma-L-Glu)(n) + L-glutamate + ATP = 10-formyltetrahydrofolyl-(gamma-L-Glu)(n+1) + ADP + phosphate + H(+). It catalyses the reaction (6R)-5,10-methylenetetrahydrofolyl-(gamma-L-Glu)(n) + L-glutamate + ATP = (6R)-5,10-methylenetetrahydrofolyl-(gamma-L-Glu)(n+1) + ADP + phosphate + H(+). It participates in cofactor biosynthesis; tetrahydrofolate biosynthesis; 7,8-dihydrofolate from 2-amino-4-hydroxy-6-hydroxymethyl-7,8-dihydropteridine diphosphate and 4-aminobenzoate: step 2/2. The protein operates within cofactor biosynthesis; tetrahydrofolylpolyglutamate biosynthesis. Functionally, functions in two distinct reactions of the de novo folate biosynthetic pathway. Catalyzes the addition of a glutamate residue to dihydropteroate (7,8-dihydropteroate or H2Pte) to form dihydrofolate (7,8-dihydrofolate monoglutamate or H2Pte-Glu). Also catalyzes successive additions of L-glutamate to tetrahydrofolate or 10-formyltetrahydrofolate or 5,10-methylenetetrahydrofolate, leading to folylpolyglutamate derivatives. This is Dihydrofolate synthase/folylpolyglutamate synthase (folC) from Buchnera aphidicola subsp. Schizaphis graminum (strain Sg).